Reading from the N-terminus, the 238-residue chain is Pyridoxine 5'-phosphate synthase (238 aa).

Position 7 (asparagine 7) interacts with 3-amino-2-oxopropyl phosphate. 1-deoxy-D-xylulose 5-phosphate is bound at residue 9–10; that stretch reads DH. Arginine 18 contacts 3-amino-2-oxopropyl phosphate. The active-site Proton acceptor is histidine 43. Residues arginine 45 and histidine 50 each contribute to the 1-deoxy-D-xylulose 5-phosphate site. Residue glutamate 70 is the Proton acceptor of the active site. Threonine 100 provides a ligand contact to 1-deoxy-D-xylulose 5-phosphate. The active-site Proton donor is the histidine 190. 3-amino-2-oxopropyl phosphate contacts are provided by residues glycine 191 and 212–213; that span reads GH.

It belongs to the PNP synthase family. As to quaternary structure, homooctamer; tetramer of dimers.

The protein resides in the cytoplasm. The catalysed reaction is 3-amino-2-oxopropyl phosphate + 1-deoxy-D-xylulose 5-phosphate = pyridoxine 5'-phosphate + phosphate + 2 H2O + H(+). The protein operates within cofactor biosynthesis; pyridoxine 5'-phosphate biosynthesis; pyridoxine 5'-phosphate from D-erythrose 4-phosphate: step 5/5. Functionally, catalyzes the complicated ring closure reaction between the two acyclic compounds 1-deoxy-D-xylulose-5-phosphate (DXP) and 3-amino-2-oxopropyl phosphate (1-amino-acetone-3-phosphate or AAP) to form pyridoxine 5'-phosphate (PNP) and inorganic phosphate. This is Pyridoxine 5'-phosphate synthase from Prochlorococcus marinus (strain MIT 9515).